The chain runs to 543 residues: Heparanase (543 aa).

The first 35 residues, 1–35 (MLLRSKPALPPPLMLLLLGPLGPLSPGALPRPAQA), serve as a signal peptide directing secretion. Heparan sulfate group is bound by residues 62–64 (DAN) and T97. A propeptide spans 110 to 157 (STFEERSYWQSQVNQDICKYGSIPPDVEEKLRLEWPYQEQLLLREHYQ) (linker peptide). A disulfide bridge links C127 with C179. Heparan sulfate group is bound at residue 158–162 (KKFKN). N-linked (GlcNAc...) asparagine glycosylation is found at N162, N178, N200, and N217. The Proton donor role is filled by E225. The N-linked (GlcNAc...) asparagine glycan is linked to N238. Heparan sulfate group-binding positions include 270-280 (QPRRKTAKMLK), H296, and R303. A required for heterodimerization with the heparanase 8 kDa subunit region spans residues 288-417 (EVIDSVTWHH…LLFKKLVGTK (130 aa)). The active-site Nucleophile is the E343. Residues 348–350 (YGG) and 389–391 (GNY) contribute to the heparan sulfate group site. The cysteines at positions 437 and 542 are disulfide-linked. Residue N459 is glycosylated (N-linked (GlcNAc...) asparagine). The interval 527 to 543 (FSYSFFVIRNAKVAACI) is required for transferring proheparanase to the Golgi apparatus, secretion and subsequent enzyme activity and for enhancement of PKB/AKT1 phosphorylation.

Belongs to the glycosyl hydrolase 79 family. As to quaternary structure, heterodimer; heterodimer formation between the 8 kDa and the 50 kDa subunits is required for enzyme activity. Interacts with TF; the interaction, inhibited by heparin, enhances the generation of activated factor X and activates coagulation. Interacts with HRG; the interaction is enhanced at acidic pH, partially inhibits binding of HPSE to cell surface receptors and modulates its enzymatic activity. Interacts with SDC1; the interaction enhances the shedding of SDC1. Interacts with HPSE2. In terms of processing, proteolytically processed. The cleavage of the 65 kDa form leads to the generation of a linker peptide, and 8 kDa and 50 kDa products. The active form, the 8/50 kDa heterodimer, is resistant to degradation. Complete removal of the linker peptide appears to be a prerequisite to the complete activation of the enzyme. Post-translationally, N-glycosylated. Glycosylation of the 50 kDa subunit appears to be essential for its solubility. In terms of tissue distribution, highly expressed in placenta and spleen and weakly expressed in lymph node, thymus, peripheral blood leukocytes, bone marrow, endothelial cells, fetal liver and tumor tissues. Also expressed in hair follicles, specifically in both Henle's and Huxley's layers of inner the root sheath (IRS) at anagen phase.

Its subcellular location is the lysosome membrane. The protein localises to the secreted. It localises to the nucleus. The enzyme catalyses endohydrolysis of (1-&gt;4)-beta-D-glycosidic bonds of heparan sulfate chains in heparan sulfate proteoglycan.. Its activity is regulated as follows. Inhibited by EDTA, laminarin sulfate and, to a lower extent, by heparin and sulfamin and activated by calcium and magnesium. Its function is as follows. Endoglycosidase that cleaves heparan sulfate proteoglycans (HSPGs) into heparan sulfate side chains and core proteoglycans. Participates in extracellular matrix (ECM) degradation and remodeling. Selectively cleaves the linkage between a glucuronic acid unit and an N-sulfo glucosamine unit carrying either a 3-O-sulfo or a 6-O-sulfo group. Can also cleave the linkage between a glucuronic acid unit and an N-sulfo glucosamine unit carrying a 2-O-sulfo group, but not linkages between a glucuronic acid unit and a 2-O-sulfated iduronic acid moiety. It is essentially inactive at neutral pH but becomes active under acidic conditions such as during tumor invasion and in inflammatory processes. Facilitates cell migration associated with metastasis, wound healing and inflammation. Enhances shedding of syndecans, and increases endothelial invasion and angiogenesis in myelomas. Acts as a procoagulant by increasing the generation of activation factor X in the presence of tissue factor and activation factor VII. Increases cell adhesion to the extracellular matrix (ECM), independent of its enzymatic activity. Induces AKT1/PKB phosphorylation via lipid rafts increasing cell mobility and invasion. Heparin increases this AKT1/PKB activation. Regulates osteogenesis. Enhances angiogenesis through up-regulation of SRC-mediated activation of VEGF. Implicated in hair follicle inner root sheath differentiation and hair homeostasis. The sequence is that of Heparanase (HPSE) from Homo sapiens (Human).